Reading from the N-terminus, the 170-residue chain is Small ribosomal subunit protein eS7 (170 aa).

Belongs to the eukaryotic ribosomal protein eS7 family. In terms of assembly, component of the small ribosomal subunit.

It localises to the cytoplasm. The sequence is that of Small ribosomal subunit protein eS7 (RPS7) from Encephalitozoon cuniculi (strain GB-M1) (Microsporidian parasite).